The primary structure comprises 343 residues: Allantoicase (343 aa).

This sequence belongs to the allantoicase family.

It carries out the reaction allantoate + H2O = (S)-ureidoglycolate + urea. It participates in nitrogen metabolism; (S)-allantoin degradation; (S)-ureidoglycolate from allantoate (aminidohydrolase route): step 1/1. Its function is as follows. Utilization of purines as secondary nitrogen sources, when primary sources are limiting. This is Allantoicase (DAL2) from Saccharomyces cerevisiae (strain ATCC 204508 / S288c) (Baker's yeast).